The chain runs to 503 residues: MASGRRAPRTGLLELRCGAGSGAGGERWQRVLLSLAEDALTVSPADGEPGPEPEPAQLNGAAEPGAAPPQLPEALLLQRRRVTVRKADAGGLGISIKGGRENKMPILISKIFKGLAADQTEALFVGDAILSVNGEDLSSATHDEAVQALKKTGKEVVLEVKYMKEVSPYFKNSAGGTSVGWDSPPASPLQRQPSSPGPQPRNLSEAKHVSLKMAYVSRRCTPTDPEPRYLEICAADGQDAVFLRAKDEASARSWAGAIQAQIGTFIPWVKDELQALLTATGTAGSQDIKQIGWLTEQLPSGGTAPTLALLTEKELLFYCSLPQSREALSRPTRTAPLIATSSAHRLVHSGPSKGSVPYDAELSFALRTGTRHGVDTHLFSVESPQELAAWTRQLVDGCHRAAEGIQEVSTACTWNGRPCSLSVHIDKGFTLWAAEPGAARAMLLRQPFEKLQMSSDDGTSLLFLDFGGAEGEIQLDLHSCPKTMVFIIHSFLSAKVTRLGLLA.

PH domains are found at residues 6 to 263 (RAPR…AQIG) and 287 to 399 (DIKQ…DGCH). Residues 40 to 68 (LTVSPADGEPGPEPEPAQLNGAAEPGAAP) are disordered. The 84-residue stretch at 81-164 (RVTVRKADAG…EVVLEVKYMK (84 aa)) folds into the PDZ domain. Ser-95, Ser-178, Ser-183, Ser-187, and Ser-194 each carry phosphoserine. The interval 177 to 203 (TSVGWDSPPASPLQRQPSSPGPQPRNL) is disordered. Residues 447-503 (PFEKLQMSSDDGTSLLFLDFGGAEGEIQLDLHSCPKTMVFIIHSFLSAKVTRLGLLA) enclose the SU domain. A calmodulin-binding region spans residues 481-503 (PKTMVFIIHSFLSAKVTRLGLLA).

The protein belongs to the syntrophin family. Monomer and homodimer. Interacts with MAPK12, TGFA, GA and F-actin. Interacts with the other members of the syntrophin family: SNTB1 and SNTB2; with dystrophin protein DMD and related proteins DTNA and UTRN; SGCG and SGCA of the dystrophin glycoprotein complex; NOS1; GRB2; calmodulin and the sodium channel proteins SCN4A and SCN5A. Interacts with MYOC; regulates muscle hypertrophy. Interacts with DTNB. Post-translationally, phosphorylated by CaM-kinase II. Phosphorylation may inhibit the interaction with DMD. In terms of tissue distribution, high expression in skeletal muscle. Expressed at intermediate level in heart, kidney and brain, and at low level in intestine, liver, lung and testis.

The protein localises to the cell membrane. The protein resides in the sarcolemma. Its subcellular location is the cell junction. It is found in the cytoplasm. It localises to the cytoskeleton. Adapter protein that binds to and probably organizes the subcellular localization of a variety of membrane proteins. May link various receptors to the actin cytoskeleton and the extracellular matrix via the dystrophin glycoprotein complex. Plays an important role in synapse formation and in the organization of UTRN and acetylcholine receptors at the neuromuscular synapse. Binds to phosphatidylinositol 4,5-bisphosphate. This chain is Alpha-1-syntrophin (Snta1), found in Mus musculus (Mouse).